The following is a 331-amino-acid chain: Polysaccharide lyase (331 aa).

The signal sequence occupies residues 1–22; that stretch reads MSLPLRLALLPTLLASASAFAA. Cys-23 is lipidated: N-palmitoyl cysteine. Residue Cys-23 is the site of S-diacylglycerol cysteine attachment.

It belongs to the polysaccharide lyase 5 family.

The protein localises to the cell outer membrane. The catalysed reaction is Eliminative cleavage of alginate to give oligosaccharides with 4-deoxy-alpha-L-erythro-hex-4-enuronosyl groups at their non-reducing ends and beta-D-mannuronate at their reducing end.. It carries out the reaction [hyaluronan](n) = n 3-(4-deoxy-beta-D-gluc-4-enuronosyl)-N-acetyl-D-glucosamine + H2O. The enzyme catalyses Eliminative cleavage of (1-&gt;4)-beta-D-glucuronans to give oligosaccharides with 4-deoxy-beta-D-gluc-4-enuronosyl groups at their non-reducing ends. Complete degradation of glucuronans results in the formation of tetrasaccharides.. Its activity is regulated as follows. Is inhibited by mono- and divalent cations as well as L-ascorbic acid 6-hexadecanoate. Polysaccharide lyase that catalyzes the depolymerization of several anionic polysaccharides via a beta-elimination mechanism. Exhibits broad substrate specificity, catalyzing the degradation of not only alginate and poly-beta-D-mannuronate (poly-ManA), but poly-beta-D-glucuronate (poly-GlcA or poly-GlcUA) and hyaluronate (HA) as well. The oligosaccharide products formed by enzymatic cleavage are comprised mainly of disaccharides, with a lower abundance of trimers and pentamers. Is not active on poly-D-galacturonate, heparin and heparin sulfate. This chain is Polysaccharide lyase, found in Stenotrophomonas maltophilia (strain K279a).